The following is a 158-amino-acid chain: Cyclic pyranopterin monophosphate synthase (158 aa).

Substrate-binding positions include 75 to 77 (LCH) and 113 to 114 (ME). D128 is a catalytic residue.

The protein belongs to the MoaC family. Homohexamer; trimer of dimers.

The catalysed reaction is (8S)-3',8-cyclo-7,8-dihydroguanosine 5'-triphosphate = cyclic pyranopterin phosphate + diphosphate. It participates in cofactor biosynthesis; molybdopterin biosynthesis. Catalyzes the conversion of (8S)-3',8-cyclo-7,8-dihydroguanosine 5'-triphosphate to cyclic pyranopterin monophosphate (cPMP). In Ralstonia pickettii (strain 12J), this protein is Cyclic pyranopterin monophosphate synthase.